A 154-amino-acid polypeptide reads, in one-letter code: Sec-independent protein translocase protein TatB (154 aa).

The helical transmembrane segment at Met-1–Gly-21 threads the bilayer.

It belongs to the TatB family. In terms of assembly, the Tat system comprises two distinct complexes: a TatABC complex, containing multiple copies of TatA, TatB and TatC subunits, and a separate TatA complex, containing only TatA subunits. Substrates initially bind to the TatABC complex, which probably triggers association of the separate TatA complex to form the active translocon.

The protein localises to the cell inner membrane. Its function is as follows. Part of the twin-arginine translocation (Tat) system that transports large folded proteins containing a characteristic twin-arginine motif in their signal peptide across membranes. Together with TatC, TatB is part of a receptor directly interacting with Tat signal peptides. TatB may form an oligomeric binding site that transiently accommodates folded Tat precursor proteins before their translocation. This is Sec-independent protein translocase protein TatB from Albidiferax ferrireducens (strain ATCC BAA-621 / DSM 15236 / T118) (Rhodoferax ferrireducens).